Reading from the N-terminus, the 435-residue chain is MEAARSGIEDVTSPDRISQLPNDLLFRILSLIPVSDAMSTSLLSKRWKSVWKMLPTLVYNENSCSNIGSLGFDQFCGRSLQLHEAPLLKTLTLELRKQTDSLDSSIFPNIHSTLLEFSIKSTGYPVYYSTISFPNNLDVFQTLVVLKLQGNICLDVVDSPVCFQSLKSLYLTCVNFENEESFSKLLSACPVLEDLFLQRLCSVGRFLFSISVPSLQRLTYTKEQAYYSNDEAILEITAPSLKHLNIFDRVGVFSFIEDMPKLVEASVRVKLSKNEKLPKVLTSVEHLSLDLYPSMVFHLDDRFISKQLLHLKLDIYDNFQSNLLLSLLKDLPNLQSLKLNHSHPSYNVEDQPCSVSEPSSVPECLSFHLETFQWIGYAGTFEEIAAAVYVLKNARCLKNATISLYSRGTENGLMMIKELESMSKGSIMCQLLVKF.

Positions 14 to 62 (PDRISQLPNDLLFRILSLIPVSDAMSTSLLSKRWKSVWKMLPTLVYNEN) constitute an F-box domain. 6 LRR repeats span residues 64–95 (CSNI…TLEL), 146–173 (LKLQ…YLTC), 174–199 (VNFE…FLQR), 222–248 (KEQA…NIFD), 266–291 (SVRV…SLDL), and 316–341 (YDNF…KLNH). The region spanning 353–404 (CSVSEPSSVPECLSFHLETFQWIGYAGTFEEIAAAVYVLKNARCLKNATISL) is the FBD domain.

This chain is Putative F-box/FBD/LRR-repeat protein At5g56810, found in Arabidopsis thaliana (Mouse-ear cress).